The chain runs to 189 residues: Interferon alpha-G (189 aa).

Positions 1-23 are cleaved as a signal peptide; that stretch reads MAPAWSLLLALLLLSCNAICSLG. 2 disulfide bridges follow: Cys-24/Cys-122 and Cys-52/Cys-162.

The protein belongs to the alpha/beta interferon family.

The protein resides in the secreted. In terms of biological role, produced by macrophages, IFN-alpha have antiviral activities. Interferon stimulates the production of two enzymes: a protein kinase and an oligoadenylate synthetase. This chain is Interferon alpha-G (IFNAG), found in Bos taurus (Bovine).